The chain runs to 602 residues: Adenylosuccinate synthetase (602 aa).

GTP contacts are provided by residues 74–80 (GDEGKGK) and 104–106 (GHT). Asp-75 functions as the Proton acceptor in the catalytic mechanism. Mg(2+)-binding residues include Asp-75 and Gly-104. IMP-binding positions include 75–78 (DEGK), 102–105 (NAGH), Thr-189, Lys-203, Gln-315, Thr-331, and Lys-459. His-105 acts as the Proton donor in catalysis. 455 to 461 (AVTKKPR) serves as a coordination point for substrate. GTP contacts are provided by residues Arg-461 and 589-591 (GNG).

The protein belongs to the adenylosuccinate synthetase family. In terms of assembly, homodimer. Mg(2+) serves as cofactor.

It is found in the cytoplasm. It catalyses the reaction IMP + L-aspartate + GTP = N(6)-(1,2-dicarboxyethyl)-AMP + GDP + phosphate + 2 H(+). Its pathway is purine metabolism; AMP biosynthesis via de novo pathway; AMP from IMP: step 1/2. In terms of biological role, plays an important role in the salvage pathway for purine nucleotide biosynthesis. Catalyzes the first committed step in the biosynthesis of AMP from IMP. This is Adenylosuccinate synthetase from Trypanosoma brucei brucei (strain 927/4 GUTat10.1).